A 398-amino-acid chain; its full sequence is Chalcone synthase 1 (398 aa).

Cys167 is a catalytic residue.

Belongs to the thiolase-like superfamily. Chalcone/stilbene synthases family.

The catalysed reaction is (E)-4-coumaroyl-CoA + 3 malonyl-CoA + 3 H(+) = 2',4,4',6'-tetrahydroxychalcone + 3 CO2 + 4 CoA. It participates in secondary metabolite biosynthesis; flavonoid biosynthesis. Functionally, the primary product of this enzyme is 4,2',4',6'-tetrahydroxychalcone (also termed naringenin-chalcone or chalcone) which can under specific conditions spontaneously isomerize into naringenin. The protein is Chalcone synthase 1 (CHS1) of Gerbera hybrida (Daisy).